A 189-amino-acid polypeptide reads, in one-letter code: Peptidyl-tRNA hydrolase (189 aa).

Y15 is a binding site for tRNA. H20 serves as the catalytic Proton acceptor. TRNA contacts are provided by F66, N68, and N114.

The protein belongs to the PTH family. Monomer.

Its subcellular location is the cytoplasm. It catalyses the reaction an N-acyl-L-alpha-aminoacyl-tRNA + H2O = an N-acyl-L-amino acid + a tRNA + H(+). Its function is as follows. Hydrolyzes ribosome-free peptidyl-tRNAs (with 1 or more amino acids incorporated), which drop off the ribosome during protein synthesis, or as a result of ribosome stalling. Catalyzes the release of premature peptidyl moieties from peptidyl-tRNA molecules trapped in stalled 50S ribosomal subunits, and thus maintains levels of free tRNAs and 50S ribosomes. The polypeptide is Peptidyl-tRNA hydrolase (Streptococcus pneumoniae (strain Taiwan19F-14)).